The following is a 505-amino-acid chain: DEAD-box ATP-dependent RNA helicase 41 (505 aa).

An HIT-type zinc finger spans residues 27-56; the sequence is GEPKCVICSRYGEYICDETNDDVCSLECKQ. The Q motif signature appears at 110–138; that stretch reads LTFTSCGLPPKLLLNLETAGYDFPTPIQM. A Helicase ATP-binding domain is found at 141 to 318; sequence IPAALTGKSL…GSLAKEIILV (178 aa). 154–161 is an ATP binding site; it reads ADTGSGKT. Residues 267-270 carry the DEAD box motif; that stretch reads DEVD. Residues 342–492 form the Helicase C-terminal domain; it reads KKQKLFDILR…AIPKELINLT (151 aa).

The protein belongs to the DEAD box helicase family. DDX59 subfamily.

It carries out the reaction ATP + H2O = ADP + phosphate + H(+). In Arabidopsis thaliana (Mouse-ear cress), this protein is DEAD-box ATP-dependent RNA helicase 41 (RH41).